A 105-amino-acid polypeptide reads, in one-letter code: Early E3A 12.1 kDa protein (105 aa).

Belongs to the adenoviridae E3A-2 family.

Not yet known. In Human adenovirus A serotype 12 (HAdV-12), this protein is Early E3A 12.1 kDa protein.